A 72-amino-acid chain; its full sequence is MTTKTTDETFTVDCPICKKAVIWSPQSPYRPFCSKRCQLIDLGEWAAEEKAIPCENADFAMDPENNEDWAKH.

Residues cysteine 14, cysteine 17, cysteine 33, and cysteine 37 each coordinate Zn(2+).

It belongs to the DNA gyrase inhibitor YacG family. Interacts with GyrB. The cofactor is Zn(2+).

In terms of biological role, inhibits all the catalytic activities of DNA gyrase by preventing its interaction with DNA. Acts by binding directly to the C-terminal domain of GyrB, which probably disrupts DNA binding by the gyrase. The chain is DNA gyrase inhibitor YacG from Mannheimia succiniciproducens (strain KCTC 0769BP / MBEL55E).